Here is a 415-residue protein sequence, read N- to C-terminus: Gamma-glutamyl phosphate reductase (415 aa).

It belongs to the gamma-glutamyl phosphate reductase family.

The protein localises to the cytoplasm. The enzyme catalyses L-glutamate 5-semialdehyde + phosphate + NADP(+) = L-glutamyl 5-phosphate + NADPH + H(+). The protein operates within amino-acid biosynthesis; L-proline biosynthesis; L-glutamate 5-semialdehyde from L-glutamate: step 2/2. Its function is as follows. Catalyzes the NADPH-dependent reduction of L-glutamate 5-phosphate into L-glutamate 5-semialdehyde and phosphate. The product spontaneously undergoes cyclization to form 1-pyrroline-5-carboxylate. In Bacillus cereus (strain ATCC 10987 / NRS 248), this protein is Gamma-glutamyl phosphate reductase.